The chain runs to 349 residues: MAEVSFGIELLPDDKPTKIAHLIKVAEDNGFEYAWICDHYNNYSYMGVLTLAAVITSKIKLGPGITNPYTRHPLITASNIATLDWISGGRAIIGMGPGDKATFDKMGLPFPCKIPIWNPEAEDEVGPATAIREVKEVIYQYLEGGPVEYEGKYVKTGTADVNARSIQGSDIPFYMGAQGPIMLKTAGEIADGVLVNASNPKDFEVAVPKIEEGAKEAGRSLDEIDVAAYTCFSIDKDEDKAIEATKIVVAFIVMGSPDVVLERHGIDTEKAEQIAEAIGKGDFGTAIGLVDEDMIEAFSIAGDPDTVVDKIEELLKAGVTQVVVGSPIGPDKEKAIELVGQEVIPHFKE.

This sequence belongs to the mer family. Homotetramer composed of two loosely associated dimers.

Its subcellular location is the cytoplasm. It carries out the reaction 5-methyl-5,6,7,8-tetrahydromethanopterin + oxidized coenzyme F420-(gamma-L-Glu)(n) + H(+) = 5,10-methylenetetrahydromethanopterin + reduced coenzyme F420-(gamma-L-Glu)(n). Its pathway is one-carbon metabolism; methanogenesis from CO(2); methyl-coenzyme M from 5,10-methylene-5,6,7,8-tetrahydromethanopterin: step 1/2. With respect to regulation, requires the presence of relatively high concentrations of either sulfate or phosphate for maximal activity. Its function is as follows. Catalyzes the reversible reduction of methylene-H(4)MPT to methyl-H(4)MPT. This is 5,10-methylenetetrahydromethanopterin reductase from Methanopyrus kandleri (strain AV19 / DSM 6324 / JCM 9639 / NBRC 100938).